The chain runs to 154 residues: UPF0547 protein C16orf87 homolog (154 aa).

The segment at 46 to 119 (HPEKAPSSTE…KHEEEREKQE (74 aa)) is disordered. Positions 68–84 (VRREKINSTVNKDLENR) are enriched in basic and acidic residues. Phosphoserine is present on Ser-91. Residues 104 to 132 (KSASAKKHEEEREKQEKEIDIYANLSDEK) are a coiled coil. The span at 109–119 (KKHEEEREKQE) shows a compositional bias: basic and acidic residues.

Belongs to the UPF0547 family.

The protein is UPF0547 protein C16orf87 homolog of Bos taurus (Bovine).